The primary structure comprises 629 residues: tRNA uridine 5-carboxymethylaminomethyl modification enzyme MnmG (629 aa).

13–18 (GGGHAG) is an FAD binding site. 273 to 287 (GPRYCPSIEDKIVRF) is an NAD(+) binding site.

It belongs to the MnmG family. As to quaternary structure, homodimer. Heterotetramer of two MnmE and two MnmG subunits. Requires FAD as cofactor.

The protein resides in the cytoplasm. In terms of biological role, NAD-binding protein involved in the addition of a carboxymethylaminomethyl (cmnm) group at the wobble position (U34) of certain tRNAs, forming tRNA-cmnm(5)s(2)U34. The sequence is that of tRNA uridine 5-carboxymethylaminomethyl modification enzyme MnmG from Marinomonas sp. (strain MWYL1).